The primary structure comprises 177 residues: Translation initiation factor IF-3 (177 aa).

The protein belongs to the IF-3 family. In terms of assembly, monomer.

It is found in the cytoplasm. In terms of biological role, IF-3 binds to the 30S ribosomal subunit and shifts the equilibrium between 70S ribosomes and their 50S and 30S subunits in favor of the free subunits, thus enhancing the availability of 30S subunits on which protein synthesis initiation begins. In Clostridium perfringens (strain 13 / Type A), this protein is Translation initiation factor IF-3.